A 308-amino-acid chain; its full sequence is Coenzyme PQQ synthesis protein B (308 aa).

It belongs to the PqqB family.

The protein operates within cofactor biosynthesis; pyrroloquinoline quinone biosynthesis. May be involved in the transport of PQQ or its precursor to the periplasm. The protein is Coenzyme PQQ synthesis protein B of Klebsiella pneumoniae subsp. pneumoniae (strain ATCC 700721 / MGH 78578).